The sequence spans 124 residues: uncharacterized protein (124 aa).

The chain crosses the membrane as a helical span at residues 83–100 (VTCFSLYTICYRIVLIWA).

Its subcellular location is the membrane. This is an uncharacterized protein from Saccharomyces cerevisiae (strain ATCC 204508 / S288c) (Baker's yeast).